The primary structure comprises 354 residues: Anthranilate phosphoribosyltransferase (354 aa).

Residues G94, G97–D98, T102, N104–T107, K122–S130, and S134 each bind 5-phospho-alpha-D-ribose 1-diphosphate. G94 is an anthranilate binding site. S106 provides a ligand contact to Mg(2+). Residue N125 participates in anthranilate binding. R180 lines the anthranilate pocket. Mg(2+)-binding residues include D238 and E239.

The protein belongs to the anthranilate phosphoribosyltransferase family. Homodimer. Mg(2+) is required as a cofactor.

The catalysed reaction is N-(5-phospho-beta-D-ribosyl)anthranilate + diphosphate = 5-phospho-alpha-D-ribose 1-diphosphate + anthranilate. Its pathway is amino-acid biosynthesis; L-tryptophan biosynthesis; L-tryptophan from chorismate: step 2/5. In terms of biological role, catalyzes the transfer of the phosphoribosyl group of 5-phosphorylribose-1-pyrophosphate (PRPP) to anthranilate to yield N-(5'-phosphoribosyl)-anthranilate (PRA). The chain is Anthranilate phosphoribosyltransferase from Streptomyces griseus subsp. griseus (strain JCM 4626 / CBS 651.72 / NBRC 13350 / KCC S-0626 / ISP 5235).